A 1391-amino-acid chain; its full sequence is ESX-5 secretion system protein EccC5 (1391 aa).

Transmembrane regions (helical) follow at residues 38-58 (WLIV…AMVF) and 65-85 (FGGI…MMMF). FtsK domains follow at residues 476–678 (GELL…GAAQ), 858–1052 (QPPW…EDAK), and 1161–1354 (LAPV…DPDE). Residues 499–506 (GTTGSGKS), 876–883 (GAGGSGKT), and 1178–1185 (GRRECGRT) each bind ATP.

As to quaternary structure, part of the ESX-5 / type VII secretion system (T7SS), which is composed of cytosolic and membrane components. The ESX-5 membrane complex is composed of EccB5, EccC5, EccD5 and EccE5.

The protein localises to the cell inner membrane. In terms of biological role, part of the ESX-5 specialized secretion system, which is responsible for the secretion of EsxN and a number of PE_PGRS and PPE proteins, including PPE41. This Mycobacterium tuberculosis (strain CDC 1551 / Oshkosh) protein is ESX-5 secretion system protein EccC5.